The primary structure comprises 208 residues: FMN-dependent NADH:quinone oxidoreductase 1 (208 aa).

Position 17 to 19 (17 to 19) interacts with FMN; it reads SVS.

The protein belongs to the azoreductase type 1 family. In terms of assembly, homodimer. FMN is required as a cofactor.

The enzyme catalyses 2 a quinone + NADH + H(+) = 2 a 1,4-benzosemiquinone + NAD(+). The catalysed reaction is N,N-dimethyl-1,4-phenylenediamine + anthranilate + 2 NAD(+) = 2-(4-dimethylaminophenyl)diazenylbenzoate + 2 NADH + 2 H(+). Quinone reductase that provides resistance to thiol-specific stress caused by electrophilic quinones. In terms of biological role, also exhibits azoreductase activity. Catalyzes the reductive cleavage of the azo bond in aromatic azo compounds to the corresponding amines. The chain is FMN-dependent NADH:quinone oxidoreductase 1 from Listeria monocytogenes serovar 1/2a (strain ATCC BAA-679 / EGD-e).